A 507-amino-acid polypeptide reads, in one-letter code: Carnosic acid synthase (507 aa).

Residues 6-23 (VFSLAFLAAWFIVVFPRW) form a helical membrane-spanning segment. Heme is bound at residue cysteine 450.

This sequence belongs to the cytochrome P450 family. Requires heme as cofactor. Expressed in glandular trichomes of young leaves.

It localises to the membrane. The catalysed reaction is 11-hydroxyferruginol + 3 reduced [NADPH--hemoprotein reductase] + 3 O2 = carnosate + 3 oxidized [NADPH--hemoprotein reductase] + 4 H2O + 4 H(+). It catalyses the reaction miltiradiene + 2 reduced [NADPH--hemoprotein reductase] + 2 O2 = miltiradien-20-al + 2 oxidized [NADPH--hemoprotein reductase] + 3 H2O + 2 H(+). The enzyme catalyses ferruginol + 3 reduced [NADPH--hemoprotein reductase] + 3 O2 = pisiferate + 3 oxidized [NADPH--hemoprotein reductase] + 4 H2O + 4 H(+). It functions in the pathway secondary metabolite biosynthesis; terpenoid biosynthesis. Its function is as follows. Monooxygenase involved in the biosynthesis of carnosate, a potent antioxidant labdane-related diterpene natural product. Catalyzes the oxidation of 11-hydroxyferruginol to produce carnosate. Mediates the conversion of miltiradien into miltiradien-20-al. Also involved in the production of pisiferic acid and derivative products from ferruginol. This Rosmarinus officinalis (Rosemary) protein is Carnosic acid synthase.